The chain runs to 390 residues: Leu/Ile/Val-binding protein homolog 6 (390 aa).

The first 21 residues, 1 to 21, serve as a signal peptide directing secretion; it reads MKKIALTALAVFSLAASAAYA.

Belongs to the leucine-binding protein family.

Its function is as follows. Component of an amino-acid transport system. The chain is Leu/Ile/Val-binding protein homolog 6 from Brucella abortus (strain 2308).